The sequence spans 481 residues: Glycogen synthase (481 aa).

An ADP-alpha-D-glucose-binding site is contributed by K15.

Belongs to the glycosyltransferase 1 family. Bacterial/plant glycogen synthase subfamily.

It catalyses the reaction [(1-&gt;4)-alpha-D-glucosyl](n) + ADP-alpha-D-glucose = [(1-&gt;4)-alpha-D-glucosyl](n+1) + ADP + H(+). The protein operates within glycan biosynthesis; glycogen biosynthesis. Synthesizes alpha-1,4-glucan chains using ADP-glucose. This Thermosipho melanesiensis (strain DSM 12029 / CIP 104789 / BI429) protein is Glycogen synthase.